The primary structure comprises 65 residues: U2-theraphotoxin-Pc1a (65 aa).

The signal sequence occupies residues 1–20 (MGFKLVLFIAVLTLVGSSNA). The propeptide occupies 21-36 (EISAKMDSRDSPMIQE). Disulfide bonds link Cys-39/Cys-56, Cys-46/Cys-59, and Cys-55/Cys-64.

Belongs to the neurotoxin 36 family. 02 subfamily. In terms of tissue distribution, expressed by the venom gland.

Its subcellular location is the secreted. Functionally, possesses strong antiplasmodial activity against the intra-erythrocyte stage of P.falciparum in vitro. IC(50) for inhibiting P.falciparum growth is 1.15 uM. Specifically interacts with infected erythrocytes. Does not lyse erythrocytes, is not cytotoxic to nucleated mammalian cells, and does not inhibit neuromuscular function. Has neither antibacterial nor antifungal activity. The chain is U2-theraphotoxin-Pc1a from Psalmopoeus cambridgei (Trinidad chevron tarantula).